Consider the following 435-residue polypeptide: uncharacterized protein (435 aa).

Positions 261, 294, 318, and 366 each coordinate S-adenosyl-L-methionine. The active-site Nucleophile is Cys393.

This sequence belongs to the class I-like SAM-binding methyltransferase superfamily. RNA M5U methyltransferase family.

This is an uncharacterized protein from Bifidobacterium longum (strain NCC 2705).